The chain runs to 207 residues: Large ribosomal subunit protein bL25 (207 aa).

The interval 186–207 is disordered; it reads SKPRGGAGAEGEADAEGEAAAE. A compositionally biased stretch (acidic residues) spans 196–207; that stretch reads GEADAEGEAAAE.

It belongs to the bacterial ribosomal protein bL25 family. CTC subfamily. Part of the 50S ribosomal subunit; part of the 5S rRNA/L5/L18/L25 subcomplex. Contacts the 5S rRNA. Binds to the 5S rRNA independently of L5 and L18.

This is one of the proteins that binds to the 5S RNA in the ribosome where it forms part of the central protuberance. The chain is Large ribosomal subunit protein bL25 from Methylobacillus flagellatus (strain ATCC 51484 / DSM 6875 / VKM B-1610 / KT).